The following is a 592-amino-acid chain: Aspartate--tRNA ligase (592 aa).

An L-aspartate-binding site is contributed by glutamate 177. Residues 201-204 (QIFK) are aspartate. Residue arginine 223 participates in L-aspartate binding. Residues 223–225 (RDE) and glutamine 232 contribute to the ATP site. Residue histidine 451 participates in L-aspartate binding. Residue glutamate 485 participates in ATP binding. Residue arginine 492 coordinates L-aspartate. 537–540 (GLDR) is an ATP binding site.

It belongs to the class-II aminoacyl-tRNA synthetase family. Type 1 subfamily. Homodimer.

It is found in the cytoplasm. It carries out the reaction tRNA(Asp) + L-aspartate + ATP = L-aspartyl-tRNA(Asp) + AMP + diphosphate. Catalyzes the attachment of L-aspartate to tRNA(Asp) in a two-step reaction: L-aspartate is first activated by ATP to form Asp-AMP and then transferred to the acceptor end of tRNA(Asp). This chain is Aspartate--tRNA ligase, found in Bacillus licheniformis (strain ATCC 14580 / DSM 13 / JCM 2505 / CCUG 7422 / NBRC 12200 / NCIMB 9375 / NCTC 10341 / NRRL NRS-1264 / Gibson 46).